The primary structure comprises 231 residues: NADH-ubiquinone oxidoreductase chain 4 (231 aa).

The next 6 helical transmembrane spans lie at 1-21 (PIAGSMVLAAILLKLGGYGII), 34-54 (MFLPFIVLALWGAILANLTCL), 63-85 (IAYSSISHMGLVVATIIIQTPWG), 89-111 (ALALMIAHGFTSSALFCLANTTY), 128-148 (ILPMATTWWLLANLMNIAIPP), and 169-189 (TIIMLGLSMLITASYSLHMFL).

This sequence belongs to the complex I subunit 4 family.

It is found in the mitochondrion membrane. The enzyme catalyses a ubiquinone + NADH + 5 H(+)(in) = a ubiquinol + NAD(+) + 4 H(+)(out). In terms of biological role, core subunit of the mitochondrial membrane respiratory chain NADH dehydrogenase (Complex I) that is believed to belong to the minimal assembly required for catalysis. Complex I functions in the transfer of electrons from NADH to the respiratory chain. The immediate electron acceptor for the enzyme is believed to be ubiquinone. This chain is NADH-ubiquinone oxidoreductase chain 4 (MT-ND4), found in Bothrocophias hyoprora (Amazonian hognose viper).